Consider the following 732-residue polypeptide: Elongation factor 2 (732 aa).

In terms of domain architecture, tr-type G spans 19 to 230 (ERIRNMGIAA…VSFKDIIDLT (212 aa)). GTP-binding positions include 28 to 35 (AHIDHGKT), 94 to 98 (DTPGH), and 148 to 151 (NKVD). Residue His597 is modified to Diphthamide.

The protein belongs to the TRAFAC class translation factor GTPase superfamily. Classic translation factor GTPase family. EF-G/EF-2 subfamily.

The protein localises to the cytoplasm. Functionally, catalyzes the GTP-dependent ribosomal translocation step during translation elongation. During this step, the ribosome changes from the pre-translocational (PRE) to the post-translocational (POST) state as the newly formed A-site-bound peptidyl-tRNA and P-site-bound deacylated tRNA move to the P and E sites, respectively. Catalyzes the coordinated movement of the two tRNA molecules, the mRNA and conformational changes in the ribosome. This chain is Elongation factor 2, found in Thermococcus sibiricus (strain DSM 12597 / MM 739).